We begin with the raw amino-acid sequence, 707 residues long: ATP-dependent RNA helicase DHX33 (707 aa).

Residues 1 to 64 (MPEEAGFPPA…LAQPSASPYP (64 aa)) form a disordered region. The segment at 1 to 80 (MPEEAGFPPA…RRSLPIFQAR (80 aa)) is required for nucleolar location. The segment covering 39–49 (GSGGRGGGGGR) has biased composition (gly residues). Positions 50–64 (RQQPPLAQPSASPYP) are enriched in low complexity. The 169-residue stretch at 84–252 (LAQLRNLDNA…FNGAPVLYLE (169 aa)) folds into the Helicase ATP-binding domain. 97-104 (GETGSGKT) serves as a coordination point for ATP. A DEAH box motif is present at residues 194–197 (DEAH). One can recognise a Helicase C-terminal domain in the interval 277–450 (SVFQIHQEAP…SVMLQLLAMK (174 aa)). Residues 471–562 (AIAQLDLLGA…ISSEGDHMTL (92 aa)) form an HA2; required for interaction with EIF3G and RPL26 region. Residues 547 to 558 (GVRKKFISSEGD) carry the Critical for rDNA-binding motif.

It belongs to the DEAD box helicase family. DEAH subfamily. In terms of assembly, interacts with UBTF. Interacts with DDX3X, EIF3G and EIF3H; the interaction is independent of RNA. Interacts (via HA2 region and Helicase C-terminal domain) with the components of the large ribosomal subunit RPL3, RPL7, RPL26 and RPL27. Interacts (via DEAH box) with NLRP3 (via NACHT domain). Binds to mRNA. Binds to double-stranded RNA (via the helicase C-terminal domain). Interacts (via the helicase C-terminal domain) with MAVS. Post-translationally, ubiquitinated, leading to its degradation by the proteasome. Deubiquitinated by USP36.

The protein localises to the nucleus. Its subcellular location is the nucleolus. The protein resides in the nucleoplasm. It localises to the cytoplasm. It is found in the inflammasome. The enzyme catalyses ATP + H2O = ADP + phosphate + H(+). In terms of biological role, implicated in nucleolar organization, ribosome biogenesis, protein synthesis and cytoplasmic dsRNA sensing. Stimulates RNA polymerase I transcription of the 47S precursor rRNA. Associates with ribosomal DNA (rDNA) loci where it is involved in POLR1A recruitment. In the cytoplasm, promotes elongation-competent 80S ribosome assembly at the late stage of mRNA translation initiation. Senses cytosolic dsRNA mediating NLRP3 inflammasome formation in macrophages and type I interferon production in myeloid dendritic cells. Required for NLRP3 activation induced by viral dsRNA and bacterial RNA. In dendritic cells, required for induction of type I interferon production induced by cytoplasmic dsRNA via the activation of MAPK and NF-kappa-B signaling pathways. The chain is ATP-dependent RNA helicase DHX33 from Homo sapiens (Human).